The following is a 337-amino-acid chain: Secreted effector protein EspF(U) (337 aa).

5 repeat units span residues 96–142 (IKPA…AEHG), 143–189 (IQPA…AEHG), 190–236 (IQPA…AEHG), 237–283 (IQPA…AEHG), and 284–330 (IQPA…AEHG). Residues 96–330 (IKPARSMAEH…RLMQHLAEHG (235 aa)) form a 5 X 48 AA approximate tandem repeats region. The interval 291-312 (AEHIPPAPNWPAPTPPVQNEQS) is disordered. A compositionally biased stretch (pro residues) spans 295-306 (PPAPNWPAPTPP).

It belongs to the EspF(U)/TccP family. As to quaternary structure, interacts with host BAIAP2 and host WASL/N-WASP. Can also interact with host proteins BAIAP2L1 and WAS/WASP.

It is found in the secreted. It localises to the host cytoplasm. Required for efficient pedestal formation in host epithelial cells during infection. Acts as an intermediate between Tir (via host BAIAP2) and host WASL/N-WASP. Directly binds and activates WASL/N-WASP, which stimulates actin polymerization and leads to the formation of actin pedestals at the sites of bacterial adhesion. This Escherichia coli O157:H7 protein is Secreted effector protein EspF(U) (espF(U)).